The sequence spans 508 residues: Steroid 17-alpha-hydroxylase/17,20 lyase (508 aa).

Asn-202 is a substrate binding site. Cys-442 provides a ligand contact to heme.

It belongs to the cytochrome P450 family. Heme is required as a cofactor. Phosphorylation is necessary for 17,20-lyase, but not for 17-alpha-hydroxylase activity.

The protein resides in the endoplasmic reticulum membrane. Its subcellular location is the microsome membrane. The enzyme catalyses a C21-steroid + reduced [NADPH--hemoprotein reductase] + O2 = a 17alpha-hydroxy-C21-steroid + oxidized [NADPH--hemoprotein reductase] + H2O + H(+). It catalyses the reaction progesterone + reduced [NADPH--hemoprotein reductase] + O2 = 17alpha-hydroxyprogesterone + oxidized [NADPH--hemoprotein reductase] + H2O + H(+). It carries out the reaction pregnenolone + reduced [NADPH--hemoprotein reductase] + O2 = 17alpha-hydroxypregnenolone + oxidized [NADPH--hemoprotein reductase] + H2O + H(+). The catalysed reaction is 17alpha-hydroxyprogesterone + reduced [NADPH--hemoprotein reductase] + O2 = androst-4-ene-3,17-dione + acetate + oxidized [NADPH--hemoprotein reductase] + H2O + 2 H(+). The enzyme catalyses 17alpha-hydroxyprogesterone + reduced [NADPH--hemoprotein reductase] + O2 = 16alpha,17alpha-dihydroxyprogesterone + oxidized [NADPH--hemoprotein reductase] + H2O + H(+). It catalyses the reaction 16alpha,17alpha-dihydroxyprogesterone + reduced [NADPH--hemoprotein reductase] + O2 = 6beta,16alpha,17alpha-trihydroxyprogesterone + oxidized [NADPH--hemoprotein reductase] + H2O + H(+). It carries out the reaction 17alpha-hydroxypregnenolone + reduced [NADPH--hemoprotein reductase] + O2 = 3beta-hydroxyandrost-5-en-17-one + acetate + oxidized [NADPH--hemoprotein reductase] + H2O + 2 H(+). The catalysed reaction is 16alpha,17alpha-dihydroxypregnenolone + reduced [NADPH--hemoprotein reductase] + O2 = 3beta,16alpha-dihydroxy-androst-5-en-17-one + acetate + oxidized [NADPH--hemoprotein reductase] + H2O + 2 H(+). The enzyme catalyses 3beta-hydroxyandrost-5-en-17-one + reduced [NADPH--hemoprotein reductase] + O2 = 3beta,16alpha-dihydroxy-androst-5-en-17-one + oxidized [NADPH--hemoprotein reductase] + H2O + H(+). It catalyses the reaction androst-4-ene-3,17-dione + reduced [NADPH--hemoprotein reductase] + O2 = 16alpha-hydroxyandrost-4-ene-3,17-dione + oxidized [NADPH--hemoprotein reductase] + H2O + H(+). It functions in the pathway steroid hormone biosynthesis. The protein operates within steroid biosynthesis; glucocorticoid biosynthesis. Regulated predominantly by intracellular cAMP levels. The 17,20-lyase activity is stimulated by cytochrome b5, which acts as an allosteric effector increasing the Vmax of the lyase activity. In terms of biological role, a cytochrome P450 monooxygenase involved in corticoid and androgen biosynthesis. Catalyzes 17-alpha hydroxylation of C21 steroids, which is common for both pathways. A second oxidative step, required only for androgen synthesis, involves an acyl-carbon cleavage. The 17-alpha hydroxy intermediates, as part of adrenal glucocorticoids biosynthesis pathway, are precursors of cortisol. Hydroxylates steroid hormones, pregnenolone and progesterone to form 17-alpha hydroxy metabolites, followed by the cleavage of the C17-C20 bond to form C19 steroids, dehydroepiandrosterone (DHEA) and androstenedione. Has 16-alpha hydroxylase activity. Catalyzes 16-alpha hydroxylation of 17-alpha hydroxy pregnenolone, followed by the cleavage of the C17-C20 bond to form 16-alpha-hydroxy DHEA. Also 16-alpha hydroxylates androgens, relevant for estriol synthesis. Mechanistically, uses molecular oxygen inserting one oxygen atom into a substrate, and reducing the second into a water molecule, with two electrons provided by NADPH via cytochrome P450 reductase (CPR; NADPH-ferrihemoprotein reductase). The polypeptide is Steroid 17-alpha-hydroxylase/17,20 lyase (Homo sapiens (Human)).